The primary structure comprises 295 residues: 4-hydroxy-tetrahydrodipicolinate synthase (295 aa).

Thr-47 provides a ligand contact to pyruvate. Tyr-135 serves as the catalytic Proton donor/acceptor. Lys-163 (schiff-base intermediate with substrate) is an active-site residue. Ile-206 is a binding site for pyruvate.

This sequence belongs to the DapA family. As to quaternary structure, homodimer.

It localises to the cytoplasm. The enzyme catalyses L-aspartate 4-semialdehyde + pyruvate = (2S,4S)-4-hydroxy-2,3,4,5-tetrahydrodipicolinate + H2O + H(+). Its pathway is amino-acid biosynthesis; L-lysine biosynthesis via DAP pathway; (S)-tetrahydrodipicolinate from L-aspartate: step 3/4. Functionally, catalyzes the condensation of (S)-aspartate-beta-semialdehyde [(S)-ASA] and pyruvate to 4-hydroxy-tetrahydrodipicolinate (HTPA). The sequence is that of 4-hydroxy-tetrahydrodipicolinate synthase from Staphylococcus aureus (strain MSSA476).